Consider the following 118-residue polypeptide: Large ribosomal subunit protein bL19 (118 aa).

Belongs to the bacterial ribosomal protein bL19 family.

In terms of biological role, this protein is located at the 30S-50S ribosomal subunit interface and may play a role in the structure and function of the aminoacyl-tRNA binding site. This is Large ribosomal subunit protein bL19 from Metamycoplasma arthritidis (strain 158L3-1) (Mycoplasma arthritidis).